The chain runs to 96 residues: Large ribosomal subunit protein uL23 (96 aa).

It belongs to the universal ribosomal protein uL23 family. Part of the 50S ribosomal subunit. Contacts protein L29, and trigger factor when it is bound to the ribosome.

Functionally, one of the early assembly proteins it binds 23S rRNA. One of the proteins that surrounds the polypeptide exit tunnel on the outside of the ribosome. Forms the main docking site for trigger factor binding to the ribosome. This chain is Large ribosomal subunit protein uL23, found in Alkaliphilus oremlandii (strain OhILAs) (Clostridium oremlandii (strain OhILAs)).